The primary structure comprises 32 residues: MSDIN-like toxin proprotein 2 (32 aa).

Positions 1–10 are excised as a propeptide; that stretch reads MSDINATRLP. The segment at residues 11–17 is a cross-link (cyclopeptide (His-Pro)); sequence HLVRYPP. Positions 18–32 are excised as a propeptide; sequence YVGDGTDLTLNRGEK.

It belongs to the MSDIN fungal toxin family. In terms of processing, processed by the macrocyclase-peptidase enzyme POPB to yield a toxic cyclic heptapeptide. POPB first removes 10 residues from the N-terminus. Conformational trapping of the remaining peptide forces the enzyme to release this intermediate rather than proceed to macrocyclization. The enzyme rebinds the remaining peptide in a different conformation and catalyzes macrocyclization of the N-terminal 7 residues.

Functionally, probable toxin that belongs to the MSDIN-like toxin family responsible for a large number of food poisoning cases and deaths. The sequence is that of MSDIN-like toxin proprotein 2 from Amanita fuligineoides.